We begin with the raw amino-acid sequence, 223 residues long: MKFAVIQFPGSNCDFDLLWAIRDVMGAEAEFVWHDEKSLAGFDGVLIPGGFSYGDYLRCGAIASFANIMPEIKRLAKEGKPVFGTCNGFQILVESGLLPGVLIRNEGLKFVSKWQALKVENNQSNFTTEYAKDALINLPIAHGEGQYVADEAQLAELKANGQIIFTYADENPNGSVENIAGIVNKEGNVLGMMPHPERAMEELLGGADGVDLFASVLKNFVGK.

Residues 2–223 (KFAVIQFPGS…ASVLKNFVGK (222 aa)) form the Glutamine amidotransferase type-1 domain. Residue cysteine 86 is the Nucleophile of the active site. Catalysis depends on residues histidine 195 and glutamate 197.

Part of the FGAM synthase complex composed of 1 PurL, 1 PurQ and 2 PurS subunits.

The protein resides in the cytoplasm. It catalyses the reaction N(2)-formyl-N(1)-(5-phospho-beta-D-ribosyl)glycinamide + L-glutamine + ATP + H2O = 2-formamido-N(1)-(5-O-phospho-beta-D-ribosyl)acetamidine + L-glutamate + ADP + phosphate + H(+). The catalysed reaction is L-glutamine + H2O = L-glutamate + NH4(+). It participates in purine metabolism; IMP biosynthesis via de novo pathway; 5-amino-1-(5-phospho-D-ribosyl)imidazole from N(2)-formyl-N(1)-(5-phospho-D-ribosyl)glycinamide: step 1/2. Functionally, part of the phosphoribosylformylglycinamidine synthase complex involved in the purines biosynthetic pathway. Catalyzes the ATP-dependent conversion of formylglycinamide ribonucleotide (FGAR) and glutamine to yield formylglycinamidine ribonucleotide (FGAM) and glutamate. The FGAM synthase complex is composed of three subunits. PurQ produces an ammonia molecule by converting glutamine to glutamate. PurL transfers the ammonia molecule to FGAR to form FGAM in an ATP-dependent manner. PurS interacts with PurQ and PurL and is thought to assist in the transfer of the ammonia molecule from PurQ to PurL. This Lactococcus lactis subsp. lactis (strain IL1403) (Streptococcus lactis) protein is Phosphoribosylformylglycinamidine synthase subunit PurQ.